The chain runs to 811 residues: Vacuolar protein sorting-associated protein 70 (811 aa).

Over residues 1-21 (MRMIQRERKREKEEGQLKERT) the composition is skewed to basic and acidic residues. The disordered stretch occupies residues 1–63 (MRMIQRERKR…MNDSFTLTSR (63 aa)). N-linked (GlcNAc...) asparagine glycosylation occurs at Asn-55. A helical membrane pass occupies residues 90-110 (FMYLILASLLLYMGFVAAFAP). An N-linked (GlcNAc...) asparagine glycan is attached at Asn-237. Positions 334–367 (FSDTPGDPTTPGYPSKDSDTEHMSPVGRVPRIPS) are disordered. A compositionally biased stretch (low complexity) spans 336-345 (DTPGDPTTPG). Residues His-445, Asp-456, and Asp-522 each coordinate Zn(2+). 2 N-linked (GlcNAc...) asparagine glycosylation sites follow: Asn-568 and Asn-599. His-607 is a Zn(2+) binding site. A glycan (N-linked (GlcNAc...) asparagine) is linked at Asn-670.

This sequence belongs to the peptidase M28 family. M28B subfamily. Zn(2+) serves as cofactor.

It is found in the membrane. Its function is as follows. Involved in vacuolar protein sorting. The sequence is that of Vacuolar protein sorting-associated protein 70 (VPS70) from Saccharomyces cerevisiae (strain ATCC 204508 / S288c) (Baker's yeast).